The following is a 376-amino-acid chain: 23S rRNA (uracil(747)-C(5))-methyltransferase RlmC (376 aa).

Residues Cys-3, Cys-11, Cys-14, and Cys-87 each contribute to the [4Fe-4S] cluster site. S-adenosyl-L-methionine-binding residues include Gln-212, Phe-241, Glu-262, and Asn-307. Cys-334 (nucleophile) is an active-site residue.

The protein belongs to the class I-like SAM-binding methyltransferase superfamily. RNA M5U methyltransferase family. RlmC subfamily.

The enzyme catalyses uridine(747) in 23S rRNA + S-adenosyl-L-methionine = 5-methyluridine(747) in 23S rRNA + S-adenosyl-L-homocysteine + H(+). Catalyzes the formation of 5-methyl-uridine at position 747 (m5U747) in 23S rRNA. This is 23S rRNA (uracil(747)-C(5))-methyltransferase RlmC from Yersinia pseudotuberculosis serotype O:1b (strain IP 31758).